The following is a 130-amino-acid chain: Small ribosomal subunit protein uS9 (130 aa).

Belongs to the universal ribosomal protein uS9 family.

In Shewanella denitrificans (strain OS217 / ATCC BAA-1090 / DSM 15013), this protein is Small ribosomal subunit protein uS9.